A 178-amino-acid polypeptide reads, in one-letter code: Aspartic proteinase nepenthesin-2 (178 aa).

D98 is an active-site residue.

It belongs to the peptidase A1 family.

It localises to the secreted. It catalyses the reaction Similar to pepsin, but also cleaves on either side of Asp and at Lys-|-Arg.. Inhibited by pepstatin and by diazoacetyl-D,L-norleucine methyl ester (DAN) in the presence of Cu(2+) ions. In terms of biological role, extracellular proteinase found in the pitcher fluid of carnivorous plants. Digest prey for nitrogen uptake. This Nepenthes distillatoria (Pitcher plant) protein is Aspartic proteinase nepenthesin-2.